The sequence spans 219 residues: MISWIKGELVSSWQANNKFYILVNCQGLGYEIQTLESVFFDINSNKISEKEIILWLKHIKKEDSDMLFGFSTKDQRDFFIQILNIKGIGSQIGMSLLNKFSLNQLITAISNNDKKSISTVQGIGQKMTERIILELKSKVINKEIEKENLNINNFLEKNKDLDSIFKDIDLTLQSLNYSKKEIKNLFPKLINNIKNSSLEKESISFENLLKEAMNYLDHK.

The tract at residues Met-1–Ser-71 is domain I. The tract at residues Thr-72–Asn-150 is domain II. Residues Ile-151–Leu-161 form a flexible linker region. The segment at Leu-161–Lys-219 is domain III.

The protein belongs to the RuvA family. As to quaternary structure, homotetramer. Forms an RuvA(8)-RuvB(12)-Holliday junction (HJ) complex. HJ DNA is sandwiched between 2 RuvA tetramers; dsDNA enters through RuvA and exits via RuvB. An RuvB hexamer assembles on each DNA strand where it exits the tetramer. Each RuvB hexamer is contacted by two RuvA subunits (via domain III) on 2 adjacent RuvB subunits; this complex drives branch migration. In the full resolvosome a probable DNA-RuvA(4)-RuvB(12)-RuvC(2) complex forms which resolves the HJ.

The protein localises to the cytoplasm. Its function is as follows. The RuvA-RuvB-RuvC complex processes Holliday junction (HJ) DNA during genetic recombination and DNA repair, while the RuvA-RuvB complex plays an important role in the rescue of blocked DNA replication forks via replication fork reversal (RFR). RuvA specifically binds to HJ cruciform DNA, conferring on it an open structure. The RuvB hexamer acts as an ATP-dependent pump, pulling dsDNA into and through the RuvAB complex. HJ branch migration allows RuvC to scan DNA until it finds its consensus sequence, where it cleaves and resolves the cruciform DNA. This Prochlorococcus marinus subsp. pastoris (strain CCMP1986 / NIES-2087 / MED4) protein is Holliday junction branch migration complex subunit RuvA.